We begin with the raw amino-acid sequence, 325 residues long: Ribose-phosphate pyrophosphokinase 2 (325 aa).

96–101 (RQDKKD) contacts ATP. The Mg(2+) site is built by Asp135, His137, Asp146, and Asp150. Residue His137 coordinates ATP. Positions 219–234 (KDRVAILVDDMADTCG) are binding of phosphoribosylpyrophosphate.

The protein belongs to the ribose-phosphate pyrophosphokinase family. As to quaternary structure, homodimer. The active form is probably a hexamer composed of 3 homodimers. Mg(2+) is required as a cofactor.

It catalyses the reaction D-ribose 5-phosphate + ATP = 5-phospho-alpha-D-ribose 1-diphosphate + AMP + H(+). The protein operates within metabolic intermediate biosynthesis; 5-phospho-alpha-D-ribose 1-diphosphate biosynthesis; 5-phospho-alpha-D-ribose 1-diphosphate from D-ribose 5-phosphate (route I): step 1/1. Activated by magnesium and inorganic phosphate. Competitively or non-competitively inhibited by ADP, 2,3-bisphosphoglyceride or GDP. Functionally, catalyzes the synthesis of phosphoribosylpyrophosphate (PRPP) that is essential for nucleotide synthesis. This is Ribose-phosphate pyrophosphokinase 2 (PRPS2) from Gallus gallus (Chicken).